Here is a 179-residue protein sequence, read N- to C-terminus: Stress response regulator gls24 homolog (179 aa).

A disordered region spans residues Thr-147–Lys-179. The span at Gly-165–Lys-179 shows a compositional bias: basic and acidic residues.

It belongs to the asp23 family.

The protein is Stress response regulator gls24 homolog of Streptococcus pyogenes serotype M28 (strain MGAS6180).